We begin with the raw amino-acid sequence, 348 residues long: Nitrogenase vanadium-iron protein beta chain (348 aa).

[8Fe-7S] cluster is bound by residues cysteine 31, cysteine 56, cysteine 115, and serine 153.

The protein belongs to the NifD/NifK/NifE/NifN family. As to quaternary structure, hexamer of two alpha, two beta, and two delta chains. Requires [8Fe-7S] cluster as cofactor.

The catalysed reaction is N2 + 8 reduced [2Fe-2S]-[ferredoxin] + 16 ATP + 16 H2O = H2 + 8 oxidized [2Fe-2S]-[ferredoxin] + 2 NH4(+) + 16 ADP + 16 phosphate + 6 H(+). Functionally, this vanadium-iron protein is part of the nitrogenase complex that catalyzes the key enzymatic reactions in nitrogen fixation. The protein is Nitrogenase vanadium-iron protein beta chain (vnfK) of Azotobacter salinestris.